Here is a 135-residue protein sequence, read N- to C-terminus: Retinol-binding protein 1 (135 aa).

An important for interaction with STRA6 region spans residues 22-32; it reads RALDVNVALRK. K41, M63, and Q109 together coordinate all-trans-retinol.

The protein belongs to the calycin superfamily. Fatty-acid binding protein (FABP) family. In terms of assembly, interacts (only as retinol-free apoprotein) with STRA6.

Its subcellular location is the cytoplasm. It localises to the lipid droplet. Cytoplasmic retinol-binding protein. Accepts retinol from the transport protein STRA6, and thereby contributes to retinol uptake, storage and retinoid homeostasis. The polypeptide is Retinol-binding protein 1 (Rbp1) (Rattus norvegicus (Rat)).